A 209-amino-acid polypeptide reads, in one-letter code: Uracil phosphoribosyltransferase (209 aa).

5-phospho-alpha-D-ribose 1-diphosphate is bound by residues R79, R104, and 131–139; that span reads DPMLATGAS. Residues I194 and 199–201 each bind uracil; that span reads GDA. 5-phospho-alpha-D-ribose 1-diphosphate is bound at residue D200.

Belongs to the UPRTase family. Mg(2+) is required as a cofactor.

The enzyme catalyses UMP + diphosphate = 5-phospho-alpha-D-ribose 1-diphosphate + uracil. It functions in the pathway pyrimidine metabolism; UMP biosynthesis via salvage pathway; UMP from uracil: step 1/1. With respect to regulation, allosterically activated by GTP. Functionally, catalyzes the conversion of uracil and 5-phospho-alpha-D-ribose 1-diphosphate (PRPP) to UMP and diphosphate. This is Uracil phosphoribosyltransferase from Staphylococcus epidermidis (strain ATCC 35984 / DSM 28319 / BCRC 17069 / CCUG 31568 / BM 3577 / RP62A).